Reading from the N-terminus, the 302-residue chain is Oxygen-dependent coproporphyrinogen-III oxidase (302 aa).

S94 lines the substrate pocket. A divalent metal cation contacts are provided by H98 and H108. H108 (proton donor) is an active-site residue. 110–112 contributes to the substrate binding site; the sequence is NVR. Residues H147 and H177 each coordinate a divalent metal cation. The segment at 242–277 is important for dimerization; it reads YVEFNLVFDRGTLFGLQSGGRTESILMSMPPVANWR. 260–262 serves as a coordination point for substrate; it reads GGR.

This sequence belongs to the aerobic coproporphyrinogen-III oxidase family. In terms of assembly, homodimer. A divalent metal cation serves as cofactor.

The protein resides in the cytoplasm. The catalysed reaction is coproporphyrinogen III + O2 + 2 H(+) = protoporphyrinogen IX + 2 CO2 + 2 H2O. It functions in the pathway porphyrin-containing compound metabolism; protoporphyrin-IX biosynthesis; protoporphyrinogen-IX from coproporphyrinogen-III (O2 route): step 1/1. Involved in the heme biosynthesis. Catalyzes the aerobic oxidative decarboxylation of propionate groups of rings A and B of coproporphyrinogen-III to yield the vinyl groups in protoporphyrinogen-IX. This Ralstonia nicotianae (strain ATCC BAA-1114 / GMI1000) (Ralstonia solanacearum) protein is Oxygen-dependent coproporphyrinogen-III oxidase.